A 392-amino-acid chain; its full sequence is Monooxygenase AgnR1 (392 aa).

Positions 1 to 20 (MSAPQKCAAVVVGAGPAGLA) are cleaved as a signal peptide. A glycan (N-linked (GlcNAc...) asparagine) is linked at N134.

Functionally, monooxygenase; part of the gene cluster that mediates the biosynthesis of agnestins, dihydroxy-xanthone metabolites. The pathway begins with the assembly and cyclization of atrochrysone thioester by the non-reducing polyketide synthase Agnpks1. The atrochrysone carboxyl ACP thioesterase AgnL7 then breaks the thioester bond and releases the atrochrysone carboxylic acid as the first enzyme-free intermediate. The decarboxylase AgnL1 then catalyzes the concerted decarboxylation-elimination required to convert atochrysone carboxylic acid into emodin anthrone, which is further oxidized to emodin by the anthrone oxygenase AgnL2. Emodin then undergoes reduction catalyzed by the oxidoreductase AgnL4 to yield the dihydroquinone tautomer which is the substrate for reduction by the short chain dehydrogenase AgnL6 reduction to produce hydroxyketone, followed by AgnL8 dehydration and likely spontaneous autoxidation to chrysophanol. Baeyer-Villiger oxidation by the oxidase AgnL3 leads to monodictyphenone via cleavage of the C-10/C-10a bond of chrysophanol. Alternative cleavage at the C-4a/C-10 bond of chrysophanol also leads to the formation some cephalone F. Further conversion to agnestins A and B, requires reduction to dihydro-monodictyphenone, oxidation to agnestin C probably via an epoxide, and rearrangement to either agnestin A or agnestin B directly, although agnestin A or agnestin B can also interconvert. Within the cluster, AgnR1 is the only unassigned oxidoreductase present which could be involved in this conversion. However, AgnR1 seems not to be involved in this step, and thus genes involved in the proposed oxidation/reduction may be located elsewhere on the genome. Further agnestin A derivatives are probably formed by spontaneous decarboxylations, dehydrations and methanolysis reactions. The polypeptide is Monooxygenase AgnR1 (Paecilomyces divaricatus (Penicillium divaricatum)).